A 465-amino-acid chain; its full sequence is Cysteine--tRNA ligase (465 aa).

C30 contributes to the Zn(2+) binding site. Positions 32–42 (PTVYDRAHLGN) match the 'HIGH' region motif. Zn(2+) contacts are provided by C213, H238, and E242. Residues 271-275 (KMSKS) carry the 'KMSKS' region motif. ATP is bound at residue K274.

The protein belongs to the class-I aminoacyl-tRNA synthetase family. As to quaternary structure, monomer. Requires Zn(2+) as cofactor.

Its subcellular location is the cytoplasm. It carries out the reaction tRNA(Cys) + L-cysteine + ATP = L-cysteinyl-tRNA(Cys) + AMP + diphosphate. This Ruegeria pomeroyi (strain ATCC 700808 / DSM 15171 / DSS-3) (Silicibacter pomeroyi) protein is Cysteine--tRNA ligase.